The following is a 607-amino-acid chain: Albumin (607 aa).

The signal sequence occupies residues 1-18 (MKWVTFVSLLFLFSSAYF). A propeptide spanning residues 19–24 (RGVLRR) is cleaved from the precursor. Albumin domains lie at 19–209 (RGVL…DALK), 210–402 (ERIL…QFTP), and 403–600 (LVEE…KLVA). A Cu cation-binding site is contributed by His27. Position 29 is a phosphoserine (Ser29). The Ca(2+) site is built by Glu30 and Asp37. The cysteines at positions 77 and 86 are disulfide-linked. Phosphoserine occurs at positions 82 and 89. His91 is a Zn(2+) binding site. 6 disulfide bridges follow: Cys99–Cys115, Cys114–Cys125, Cys147–Cys192, Cys191–Cys200, Cys223–Cys269, and Cys268–Cys276. A Phosphothreonine modification is found at Thr107. Residue Lys228 is modified to N6-succinyllysine. Glu267 is a binding site for Ca(2+). His270 and Asp272 together coordinate Zn(2+). 4 residues coordinate Ca(2+): Asp272, Glu275, Asp278, and Asp282. Intrachain disulfides connect Cys288–Cys302, Cys301–Cys312, Cys339–Cys384, Cys383–Cys392, Cys415–Cys461, Cys460–Cys471, Cys484–Cys500, and Cys499–Cys510. At Ser442 the chain carries Phosphoserine. Thr443 and Thr445 each carry phosphothreonine. Ser512 is subject to Phosphoserine. Cystine bridges form between Cys537–Cys582 and Cys581–Cys590. Lys557 carries the post-translational modification N6-methyllysine. Thr569 carries the post-translational modification Phosphothreonine. Lys587 carries the post-translational modification N6-succinyllysine.

This sequence belongs to the ALB/AFP/VDB family. As to quaternary structure, interacts with FCGRT; this interaction regulates ALB homeostasis. Interacts with TASOR. In plasma, occurs in a covalently-linked complex with chromophore-bound alpha-1-microglobulin; this interaction does not prevent fatty acid binding to ALB. Post-translationally, phosphorylated by FAM20C in the extracellular medium. In terms of tissue distribution, plasma.

It is found in the secreted. Binds water, Ca(2+), Na(+), K(+), fatty acids, hormones, bilirubin and drugs. Its main function is the regulation of the colloidal osmotic pressure of blood. Major zinc transporter in plasma, typically binds about 80% of all plasma zinc. Major calcium and magnesium transporter in plasma, binds approximately 45% of circulating calcium and magnesium in plasma. Potentially has more than two calcium-binding sites and might additionally bind calcium in a non-specific manner. The shared binding site between zinc and calcium at residue Asp-272 suggests a crosstalk between zinc and calcium transport in the blood. The rank order of affinity is zinc &gt; calcium &gt; magnesium. Binds to the bacterial siderophore enterobactin and inhibits enterobactin-mediated iron uptake of E.coli from ferric transferrin, and may thereby limit the utilization of iron and growth of enteric bacteria such as E.coli. Does not prevent iron uptake by the bacterial siderophore aerobactin. This Equus asinus (Donkey) protein is Albumin (ALB).